The primary structure comprises 354 residues: DNA integrity scanning protein DisA (354 aa).

Residues 6–144 enclose the DAC domain; it reads DDELKKILKI…GDIKYVLRDS (139 aa). ATP is bound by residues glycine 73, leucine 91, and 104–108; that span reads TRHRT.

This sequence belongs to the DisA family. In terms of assembly, homooctamer. It depends on Mg(2+) as a cofactor.

The enzyme catalyses 2 ATP = 3',3'-c-di-AMP + 2 diphosphate. Its function is as follows. Participates in a DNA-damage check-point that is active prior to asymmetric division when DNA is damaged. DisA forms globular foci that rapidly scan along the chromosomes during sporulation, searching for lesions. When a lesion is present, DisA pauses at the lesion site. This triggers a cellular response that culminates in a temporary block in sporulation initiation. Also has diadenylate cyclase activity, catalyzing the condensation of 2 ATP molecules into cyclic di-AMP (c-di-AMP). c-di-AMP acts as a signaling molecule that couples DNA integrity with progression of sporulation. The rise in c-di-AMP level generated by DisA while scanning the chromosome, operates as a positive signal that advances sporulation; upon encountering a lesion, the DisA focus arrests at the damaged site and halts c-di-AMP synthesis. The chain is DNA integrity scanning protein DisA from Clostridium perfringens (strain SM101 / Type A).